Reading from the N-terminus, the 165-residue chain is MVPAYIPNPVAALCGGGTPIDFCRNYTDGRRILGNGKTYRGLICGVLAGVLIGLVQIWLVGTYHWDLPRQTILSVTLLALGALLGDMGKSFIKRRLGKERGEAWPVADQYDLVVGAFLLTIIFDPAWFFAVVTLPVLIAILVITPVLHRSVNILGYWIKVKKEPW.

The next 4 helical transmembrane spans lie at 41–61 (GLIC…WLVG), 72–92 (ILSV…KSFI), 103–123 (AWPV…TIIF), and 127–147 (WFFA…TPVL).

This sequence belongs to the CDP-archaeol synthase family. Requires Mg(2+) as cofactor.

Its subcellular location is the cell membrane. It catalyses the reaction 2,3-bis-O-(geranylgeranyl)-sn-glycerol 1-phosphate + CTP + H(+) = CDP-2,3-bis-O-(geranylgeranyl)-sn-glycerol + diphosphate. It functions in the pathway membrane lipid metabolism; glycerophospholipid metabolism. In terms of biological role, catalyzes the formation of CDP-2,3-bis-(O-geranylgeranyl)-sn-glycerol (CDP-archaeol) from 2,3-bis-(O-geranylgeranyl)-sn-glycerol 1-phosphate (DGGGP) and CTP. This reaction is the third ether-bond-formation step in the biosynthesis of archaeal membrane lipids. This chain is CDP-archaeol synthase, found in Methanoregula boonei (strain DSM 21154 / JCM 14090 / 6A8).